The chain runs to 429 residues: Tryptophan synthase beta chain 2 (429 aa).

The interval 18 to 40 (NINPDLPSPLPEPKNPEGGKNIE) is disordered. K110 bears the N6-(pyridoxal phosphate)lysine mark.

Belongs to the TrpB family. As to quaternary structure, tetramer of two alpha and two beta chains. Pyridoxal 5'-phosphate serves as cofactor.

The enzyme catalyses (1S,2R)-1-C-(indol-3-yl)glycerol 3-phosphate + L-serine = D-glyceraldehyde 3-phosphate + L-tryptophan + H2O. The protein operates within amino-acid biosynthesis; L-tryptophan biosynthesis; L-tryptophan from chorismate: step 5/5. In terms of biological role, the beta subunit is responsible for the synthesis of L-tryptophan from indole and L-serine. The polypeptide is Tryptophan synthase beta chain 2 (trpB2) (Methanothermobacter thermautotrophicus (strain ATCC 29096 / DSM 1053 / JCM 10044 / NBRC 100330 / Delta H) (Methanobacterium thermoautotrophicum)).